Here is a 399-residue protein sequence, read N- to C-terminus: Serine/threonine-protein kinase PknL (399 aa).

Residues 1–368 (MVEAGTRDPL…FIWARQHARR (368 aa)) are Cytoplasmic-facing. In terms of domain architecture, Protein kinase spans 19–278 (YLVQAKIASG…IAMGADLEAI (260 aa)). ATP is bound by residues 25-33 (IASGGTSTV) and Lys48. The active-site Proton acceptor is the Asp142. Residues 312 to 346 (GQLGAKPVHHPTRQLTRQPGDCSEPASGSEPEHEP) form a disordered region. A helical membrane pass occupies residues 369 to 389 (MVLVWVSVVLAITGLVASAAW). Over 390–399 (TIGSNLSGLL) the chain is Extracellular.

It belongs to the protein kinase superfamily. Ser/Thr protein kinase family. In terms of processing, autophosphorylated.

Its subcellular location is the cell membrane. The enzyme catalyses L-seryl-[protein] + ATP = O-phospho-L-seryl-[protein] + ADP + H(+). It catalyses the reaction L-threonyl-[protein] + ATP = O-phospho-L-threonyl-[protein] + ADP + H(+). The polypeptide is Serine/threonine-protein kinase PknL (pknL) (Mycobacterium bovis (strain ATCC BAA-935 / AF2122/97)).